A 358-amino-acid polypeptide reads, in one-letter code: tRNA-specific 2-thiouridylase MnmA (358 aa).

ATP contacts are provided by residues 7–14 (AMSGGVDS) and Leu33. The active-site Nucleophile is the Cys101. Cys101 and Cys197 are disulfide-bonded. Residue Gly125 coordinates ATP. An interaction with tRNA region spans residues 147-149 (KDQ). Catalysis depends on Cys197, which acts as the Cysteine persulfide intermediate.

The protein belongs to the MnmA/TRMU family.

The protein localises to the cytoplasm. It catalyses the reaction S-sulfanyl-L-cysteinyl-[protein] + uridine(34) in tRNA + AH2 + ATP = 2-thiouridine(34) in tRNA + L-cysteinyl-[protein] + A + AMP + diphosphate + H(+). Catalyzes the 2-thiolation of uridine at the wobble position (U34) of tRNA, leading to the formation of s(2)U34. The protein is tRNA-specific 2-thiouridylase MnmA of Rickettsia prowazekii (strain Madrid E).